A 201-amino-acid polypeptide reads, in one-letter code: Segregation and condensation protein B (201 aa).

This sequence belongs to the ScpB family. As to quaternary structure, homodimer. Homodimerization may be required to stabilize the binding of ScpA to the Smc head domains. Component of a cohesin-like complex composed of ScpA, ScpB and the Smc homodimer, in which ScpA and ScpB bind to the head domain of Smc. The presence of the three proteins is required for the association of the complex with DNA.

It is found in the cytoplasm. Functionally, participates in chromosomal partition during cell division. May act via the formation of a condensin-like complex containing Smc and ScpA that pull DNA away from mid-cell into both cell halves. This Enterococcus faecalis (strain ATCC 700802 / V583) protein is Segregation and condensation protein B.